A 39-amino-acid chain; its full sequence is Protein MchX (39 aa).

The helical transmembrane segment at 15 to 37 (SALSSTLLLSLIMSATLLEYSLS) threads the bilayer.

The protein localises to the cell inner membrane. In terms of biological role, required for microcin H47 production. Possibly involved in a regulatory loop modulating its own expression and that of MchI and MchB. The protein is Protein MchX (mchX) of Escherichia coli.